A 58-amino-acid polypeptide reads, in one-letter code: Potassium channel toxin alpha-KTx 26.2 (58 aa).

Positions 1–19 are cleaved as a signal peptide; it reads MKTIFVVILVLFVLSAMLA. Cystine bridges form between Cys31–Cys49, Cys35–Cys54, and Cys39–Cys56.

The protein belongs to the short scorpion toxin superfamily. Potassium channel inhibitor family. Alpha-KTx 26 subfamily. In terms of tissue distribution, expressed by the venom gland.

The protein localises to the secreted. In terms of biological role, inhibits voltage-gated potassium channels. The sequence is that of Potassium channel toxin alpha-KTx 26.2 from Lychas mucronatus (Chinese swimming scorpion).